The sequence spans 371 residues: Ribosomal RNA small subunit methyltransferase H (371 aa).

Residues 92-94, Asp-111, Tyr-138, Asp-159, and Gln-166 each bind S-adenosyl-L-methionine; that span reads GGH.

This sequence belongs to the methyltransferase superfamily. RsmH family.

The protein resides in the cytoplasm. The enzyme catalyses cytidine(1402) in 16S rRNA + S-adenosyl-L-methionine = N(4)-methylcytidine(1402) in 16S rRNA + S-adenosyl-L-homocysteine + H(+). Specifically methylates the N4 position of cytidine in position 1402 (C1402) of 16S rRNA. The polypeptide is Ribosomal RNA small subunit methyltransferase H (Mycolicibacterium gilvum (strain PYR-GCK) (Mycobacterium gilvum (strain PYR-GCK))).